The primary structure comprises 113 residues: Large ribosomal subunit protein bL19 (113 aa).

Belongs to the bacterial ribosomal protein bL19 family.

In terms of biological role, this protein is located at the 30S-50S ribosomal subunit interface and may play a role in the structure and function of the aminoacyl-tRNA binding site. The sequence is that of Large ribosomal subunit protein bL19 (rplS) from Mycobacterium bovis (strain ATCC BAA-935 / AF2122/97).